Consider the following 347-residue polypeptide: NADH-ubiquinone oxidoreductase chain 2 (347 aa).

11 consecutive transmembrane segments (helical) span residues 3-23, 25-45, 59-79, 96-116, 122-142, 149-169, 178-198, 200-220, 237-257, 274-294, and 325-345; these read PVVL…VMTT, HWLL…PILM, YFLT…INLI, IIMT…FWVP, IQLS…MSIL, INLH…GWGG, IMAY…IYNP, MALL…MTFM, MPLL…LPPL, NSII…FFYM, and LLSP…MLAL.

The protein belongs to the complex I subunit 2 family. In terms of assembly, core subunit of respiratory chain NADH dehydrogenase (Complex I) which is composed of 45 different subunits. Interacts with TMEM242.

It localises to the mitochondrion inner membrane. The enzyme catalyses a ubiquinone + NADH + 5 H(+)(in) = a ubiquinol + NAD(+) + 4 H(+)(out). Core subunit of the mitochondrial membrane respiratory chain NADH dehydrogenase (Complex I) which catalyzes electron transfer from NADH through the respiratory chain, using ubiquinone as an electron acceptor. Essential for the catalytic activity and assembly of complex I. The protein is NADH-ubiquinone oxidoreductase chain 2 of Paranyctimene raptor (Unstriped tube-nosed fruit bat).